We begin with the raw amino-acid sequence, 102 residues long: Glycoprotein 24A (102 aa).

It belongs to the csb family. Post-translationally, O-glycosylated.

The protein resides in the cell surface. Functionally, cell-cell adhesion during early development. This chain is Glycoprotein 24A (csbA), found in Dictyostelium discoideum (Social amoeba).